A 933-amino-acid chain; its full sequence is MEKYFNKTGYLFAGNAVFVEELYRQYLANPNSVDQTWQEFFADIKDNNALLNKSTAKVIRPNPNVTKALLNNNLSYEGLHNLKAKEMISAYRRNAHYLANLDPLGLEIRKTKDELKLNIEAFGLDSSQLEENINITDEFIGTWNCKLSELVTKLDKVYTSSIGVEFDQIENVEEKNWLYTKLETEITFASEEKRSILNDFVEVECFEQFLHTKFPGAKRFSIEGGDSSIVAMNKAIDLSMNQGVEEIVIGMAHRGRLNTLTKVVGKPYKAVIAGFINGNVFPDELNISGDVKYHLGYSADRVRANQKIHLSLADNPSHLEAINSIVAGKVRAKQDMLVDTKRSKVKAILLHGDAAFCGQGVVAESLSMSPLTAYNVGGILHFVINNQLGFTANAADTRASRYSTEFAKIIAAPILHVNGDDIEAVLKATDIAVEYRQKFSKDVVVEIICYRKYGHNEGDEPMYTQSKMYNIIKSKPTPGNIYANELVKSGIIDNNYYAKLKEKFKIKLDKEYEQAKSYKQESHFLGGCWKGISRTRGKAAITGVNKKILQDLGTKLCEIPKDFTINPKLVRLFEVRKNTLTTDQPIDWATAEQLAFAHLLCSGTNIRLTGQDSERGTFSHRHSILHNQIDDTTYIPLNNLSKTQAQYEVANSNLAEYAVLGFEYGYSLASPKNLVLWEAQFGDFANGAQIIFDQFISSSATKWLRMSGLVVLLPHAFEGQGPEHSSARLERFLQLAAEENMYITYPTTPASIFHLLRRQILESIRKPLIVMSPKSLLRHKYAVSKLDELGENTTFIPVLDEVTKIDKNNITKVILCSGKVYYDLFAKRVHNSNIVIIRLEQLYPFEKTLVASLLKKYNKAQAFIWCQEEPKNMGAWNYIAEHLNDALKEAEINNEFKYVGREESASPAVGSLQVHNKQQEKLLMEALGDDIIK.

This sequence belongs to the alpha-ketoglutarate dehydrogenase family. Homodimer. Part of the 2-oxoglutarate dehydrogenase (OGDH) complex composed of E1 (2-oxoglutarate dehydrogenase), E2 (dihydrolipoamide succinyltransferase) and E3 (dihydrolipoamide dehydrogenase); the complex contains multiple copies of the three enzymatic components (E1, E2 and E3). It depends on thiamine diphosphate as a cofactor.

It catalyses the reaction N(6)-[(R)-lipoyl]-L-lysyl-[protein] + 2-oxoglutarate + H(+) = N(6)-[(R)-S(8)-succinyldihydrolipoyl]-L-lysyl-[protein] + CO2. E1 component of the 2-oxoglutarate dehydrogenase (OGDH) complex which catalyzes the decarboxylation of 2-oxoglutarate, the first step in the conversion of 2-oxoglutarate to succinyl-CoA and CO(2). The protein is 2-oxoglutarate dehydrogenase E1 component (sucA) of Rickettsia typhi (strain ATCC VR-144 / Wilmington).